The following is a 69-amino-acid chain: Ribosome modulation factor (69 aa).

It belongs to the ribosome modulation factor family.

Its subcellular location is the cytoplasm. Functionally, during stationary phase, converts 70S ribosomes to an inactive dimeric form (100S ribosomes). The polypeptide is Ribosome modulation factor (Marinomonas mediterranea (strain ATCC 700492 / JCM 21426 / NBRC 103028 / MMB-1)).